A 137-amino-acid chain; its full sequence is Large ribosomal subunit protein uL16 (137 aa).

The protein belongs to the universal ribosomal protein uL16 family. As to quaternary structure, part of the 50S ribosomal subunit.

In terms of biological role, binds 23S rRNA and is also seen to make contacts with the A and possibly P site tRNAs. The sequence is that of Large ribosomal subunit protein uL16 from Baumannia cicadellinicola subsp. Homalodisca coagulata.